The chain runs to 406 residues: Imidazolonepropionase (406 aa).

Fe(3+) is bound by residues H72 and H74. Zn(2+) is bound by residues H72 and H74. 4-imidazolone-5-propanoate-binding residues include R81, Y144, and H177. N-formimidoyl-L-glutamate is bound at residue Y144. H242 is a binding site for Fe(3+). H242 provides a ligand contact to Zn(2+). Q245 provides a ligand contact to 4-imidazolone-5-propanoate. D317 is a Fe(3+) binding site. A Zn(2+)-binding site is contributed by D317. Positions 319 and 321 each coordinate N-formimidoyl-L-glutamate. T322 serves as a coordination point for 4-imidazolone-5-propanoate.

Belongs to the metallo-dependent hydrolases superfamily. HutI family. Zn(2+) is required as a cofactor. Requires Fe(3+) as cofactor.

Its subcellular location is the cytoplasm. The enzyme catalyses 4-imidazolone-5-propanoate + H2O = N-formimidoyl-L-glutamate. The protein operates within amino-acid degradation; L-histidine degradation into L-glutamate; N-formimidoyl-L-glutamate from L-histidine: step 3/3. Catalyzes the hydrolytic cleavage of the carbon-nitrogen bond in imidazolone-5-propanoate to yield N-formimidoyl-L-glutamate. It is the third step in the universal histidine degradation pathway. The chain is Imidazolonepropionase from Yersinia pseudotuberculosis serotype O:1b (strain IP 31758).